Reading from the N-terminus, the 348-residue chain is tRNA N6-adenosine threonylcarbamoyltransferase (348 aa).

Fe cation is bound by residues H116 and H120. Substrate-binding positions include 138–142 (QVSGG), D171, G184, D188, and N277. D309 is a binding site for Fe cation.

This sequence belongs to the KAE1 / TsaD family. Fe(2+) is required as a cofactor.

The protein resides in the cytoplasm. The catalysed reaction is L-threonylcarbamoyladenylate + adenosine(37) in tRNA = N(6)-L-threonylcarbamoyladenosine(37) in tRNA + AMP + H(+). In terms of biological role, required for the formation of a threonylcarbamoyl group on adenosine at position 37 (t(6)A37) in tRNAs that read codons beginning with adenine. Is involved in the transfer of the threonylcarbamoyl moiety of threonylcarbamoyl-AMP (TC-AMP) to the N6 group of A37, together with TsaE and TsaB. TsaD likely plays a direct catalytic role in this reaction. In Lactobacillus johnsonii (strain CNCM I-12250 / La1 / NCC 533), this protein is tRNA N6-adenosine threonylcarbamoyltransferase.